Here is a 27-residue protein sequence, read N- to C-terminus: Defensin-like protein 1 (27 aa).

A Pyrrolidone carboxylic acid modification is found at Gln-1.

This sequence belongs to the DEFL family. Forms oligomers in its native state.

Its function is as follows. Possesses antifungal activity sensitive to inorganic cations. This is Defensin-like protein 1 from Brassica campestris (Field mustard).